A 96-amino-acid chain; its full sequence is UPF0213 protein BCE_0033 (96 aa).

Positions 4–79 (NKHCFYVVEC…KQLNRKQKEE (76 aa)) constitute a GIY-YIG domain.

Belongs to the UPF0213 family.

This Bacillus cereus (strain ATCC 10987 / NRS 248) protein is UPF0213 protein BCE_0033.